The primary structure comprises 459 residues: MSLRIYNTLSRAIEPLIPLQPGHVRMYVCGMTVYDLCHLGHARAMVAFDVVQRWLKVSGLRVTYVRNVTDIDDKIIKRALENGESIRALTERMVDALHQDADALGIERPTHEPRATEFVPQMLSLIGRLEQKGLAYQAVNGDVNYAVRKFPGYGKLSGKSLDELRAGERVAVADGKDDPLDFVLWKTAKPNEPLDAKWDSVYGQGRPGWHIECSAMCGQMLGETVDIHGGGADLQFPHHENEIAQSEGATGKPLASIWMHNGFVTRDNEKMSKSLGNFFTIRDILARYDAETTRFFIIRAHYRSALNHSDAHLDDARNSLKRLYTALDLVAPEPLLEIDWRQPFAARFKAAMDEDFGTPEAVAVMFELATEVNKTRDPKLAGLLKALGACLGLLQGDPKVFLQAGATLDAASIAALIAQRTAAKAAKNFAEADRIRQDLLARGIVLKDSAAGTVWEVVA.

Cys29 provides a ligand contact to Zn(2+). Residues 31–41 carry the 'HIGH' region motif; sequence MTVYDLCHLGH. Zn(2+) contacts are provided by Cys213, His238, and Glu242. A 'KMSKS' region motif is present at residues 270–274; it reads KMSKS. Lys273 serves as a coordination point for ATP.

The protein belongs to the class-I aminoacyl-tRNA synthetase family. Monomer. Requires Zn(2+) as cofactor.

The protein localises to the cytoplasm. The catalysed reaction is tRNA(Cys) + L-cysteine + ATP = L-cysteinyl-tRNA(Cys) + AMP + diphosphate. The sequence is that of Cysteine--tRNA ligase from Albidiferax ferrireducens (strain ATCC BAA-621 / DSM 15236 / T118) (Rhodoferax ferrireducens).